The primary structure comprises 402 residues: Apolipoprotein L3 (402 aa).

It belongs to the apolipoprotein L family. As to expression, widely expressed; the highest levels are in prostate, lung and placenta; also detected in kidney, bone marrow, spleen, thymus, spinal cord, adrenal gland, salivary gland, trachea and mammary gland; levels are low in brain, heart, fetal liver, pancreas and testis.

The protein localises to the cytoplasm. In terms of biological role, may affect the movement of lipids in the cytoplasm or allow the binding of lipids to organelles. The protein is Apolipoprotein L3 (APOL3) of Homo sapiens (Human).